The following is a 213-amino-acid chain: MKFFIDTANLEEIKHAHELGILAGVTTNPSLVAKENVSFHDRLREITSIVSGSVSAEVISTDAAGMIAEGEELAKIAPNITIKVPMTPEGLKAVKAFSEKGIQTNVTLVFTANQALLAARAGATYVSPFLGRLDDIGHNGLELISTIAEIFNIHGIETEIIAASIRHPHHVTEAALRGAHIATVPYKVLMQLFNHPLTDQGIEKFLADWNRQK.

Lys-83 acts as the Schiff-base intermediate with substrate in catalysis.

Belongs to the transaldolase family. Type 3B subfamily.

Its subcellular location is the cytoplasm. The catalysed reaction is D-sedoheptulose 7-phosphate + D-glyceraldehyde 3-phosphate = D-erythrose 4-phosphate + beta-D-fructose 6-phosphate. Its pathway is carbohydrate degradation; pentose phosphate pathway; D-glyceraldehyde 3-phosphate and beta-D-fructose 6-phosphate from D-ribose 5-phosphate and D-xylulose 5-phosphate (non-oxidative stage): step 2/3. In terms of biological role, transaldolase is important for the balance of metabolites in the pentose-phosphate pathway. In Geobacillus kaustophilus (strain HTA426), this protein is Probable transaldolase.